Consider the following 447-residue polypeptide: Signal recognition particle 54 kDa protein (447 aa).

Residues G103–T110, D185–R189, and T245–D248 contribute to the GTP site.

Belongs to the GTP-binding SRP family. SRP54 subfamily. In terms of assembly, part of the signal recognition particle protein translocation system, which is composed of SRP and FtsY. Archaeal SRP consists of a 7S RNA molecule of 300 nucleotides and two protein subunits: SRP54 and SRP19.

Its subcellular location is the cytoplasm. The catalysed reaction is GTP + H2O = GDP + phosphate + H(+). Its function is as follows. Involved in targeting and insertion of nascent membrane proteins into the cytoplasmic membrane. Binds to the hydrophobic signal sequence of the ribosome-nascent chain (RNC) as it emerges from the ribosomes. The SRP-RNC complex is then targeted to the cytoplasmic membrane where it interacts with the SRP receptor FtsY. This is Signal recognition particle 54 kDa protein from Saccharolobus solfataricus (strain ATCC 35092 / DSM 1617 / JCM 11322 / P2) (Sulfolobus solfataricus).